The following is a 293-amino-acid chain: tRNA (guanine-N(7)-)-methyltransferase (293 aa).

Residues 1–31 are compositionally biased toward basic and acidic residues; that stretch reads MGGDKIKKDKRQKREDYRAAMRKDDISELPR. 2 disordered regions span residues 1–33 and 68–97; these read MGGD…PRKK and IVDE…TPLR. Positions 75–85 are enriched in pro residues; the sequence is TSPPPPPPVPE. S-adenosyl-L-methionine-binding positions include Gly-111, 134-135, 169-170, and Cys-189; these read EI and NT. Asp-192 is an active-site residue. Residue 267 to 269 participates in S-adenosyl-L-methionine binding; the sequence is TEE.

Belongs to the class I-like SAM-binding methyltransferase superfamily. TrmB family. As to quaternary structure, forms a complex with TRM82.

It is found in the nucleus. It catalyses the reaction guanosine(46) in tRNA + S-adenosyl-L-methionine = N(7)-methylguanosine(46) in tRNA + S-adenosyl-L-homocysteine. Its pathway is tRNA modification; N(7)-methylguanine-tRNA biosynthesis. Catalyzes the formation of N(7)-methylguanine at position 46 (m7G46) in tRNA. This chain is tRNA (guanine-N(7)-)-methyltransferase, found in Chaetomium globosum (strain ATCC 6205 / CBS 148.51 / DSM 1962 / NBRC 6347 / NRRL 1970) (Soil fungus).